Consider the following 274-residue polypeptide: NH(3)-dependent NAD(+) synthetase (274 aa).

Gly46 to Ser53 is a binding site for ATP. Asp52 serves as a coordination point for Mg(2+). Residue Arg140 coordinates deamido-NAD(+). Thr160 serves as a coordination point for ATP. Glu165 is a Mg(2+) binding site. Residues Lys173 and Asp180 each contribute to the deamido-NAD(+) site. Residues Lys189 and Thr211 each contribute to the ATP site. His260 to Lys261 is a deamido-NAD(+) binding site.

This sequence belongs to the NAD synthetase family. In terms of assembly, homodimer.

It catalyses the reaction deamido-NAD(+) + NH4(+) + ATP = AMP + diphosphate + NAD(+) + H(+). It functions in the pathway cofactor biosynthesis; NAD(+) biosynthesis; NAD(+) from deamido-NAD(+) (ammonia route): step 1/1. Its function is as follows. Catalyzes the ATP-dependent amidation of deamido-NAD to form NAD. Uses ammonia as a nitrogen source. The sequence is that of NH(3)-dependent NAD(+) synthetase from Listeria welshimeri serovar 6b (strain ATCC 35897 / DSM 20650 / CCUG 15529 / CIP 8149 / NCTC 11857 / SLCC 5334 / V8).